Consider the following 565-residue polypeptide: Probable peptidoglycan D,D-transpeptidase PbpC (565 aa).

The chain crosses the membrane as a helical span at residues 10 to 30 (FILVVTLFVLASLAVSGRLVY). The active-site Acyl-ester intermediate is the Ser-289.

It belongs to the transpeptidase family. FtsI subfamily.

Its subcellular location is the cell inner membrane. The catalysed reaction is Preferential cleavage: (Ac)2-L-Lys-D-Ala-|-D-Ala. Also transpeptidation of peptidyl-alanyl moieties that are N-acyl substituents of D-alanine.. It participates in cell wall biogenesis; peptidoglycan biosynthesis. Catalyzes cross-linking of the peptidoglycan cell wall at the division septum. Binds penicillin. This chain is Probable peptidoglycan D,D-transpeptidase PbpC, found in Pseudomonas aeruginosa (strain ATCC 15692 / DSM 22644 / CIP 104116 / JCM 14847 / LMG 12228 / 1C / PRS 101 / PAO1).